Consider the following 948-residue polypeptide: Bifunctional glutamine synthetase adenylyltransferase/adenylyl-removing enzyme (948 aa).

The segment at Met1–Ser447 is adenylyl removase. Positions Glu453–Asp948 are adenylyl transferase.

The protein belongs to the GlnE family. Requires Mg(2+) as cofactor.

It catalyses the reaction [glutamine synthetase]-O(4)-(5'-adenylyl)-L-tyrosine + phosphate = [glutamine synthetase]-L-tyrosine + ADP. It carries out the reaction [glutamine synthetase]-L-tyrosine + ATP = [glutamine synthetase]-O(4)-(5'-adenylyl)-L-tyrosine + diphosphate. Functionally, involved in the regulation of glutamine synthetase GlnA, a key enzyme in the process to assimilate ammonia. When cellular nitrogen levels are high, the C-terminal adenylyl transferase (AT) inactivates GlnA by covalent transfer of an adenylyl group from ATP to specific tyrosine residue of GlnA, thus reducing its activity. Conversely, when nitrogen levels are low, the N-terminal adenylyl removase (AR) activates GlnA by removing the adenylyl group by phosphorolysis, increasing its activity. The regulatory region of GlnE binds the signal transduction protein PII (GlnB) which indicates the nitrogen status of the cell. The sequence is that of Bifunctional glutamine synthetase adenylyltransferase/adenylyl-removing enzyme from Idiomarina loihiensis (strain ATCC BAA-735 / DSM 15497 / L2-TR).